An 87-amino-acid chain; its full sequence is Small ribosomal subunit protein bS20 (87 aa).

The disordered stretch occupies residues 1–26 (MANIKSAKKRAVQSEKRRKHNASRRS).

Belongs to the bacterial ribosomal protein bS20 family.

Binds directly to 16S ribosomal RNA. The polypeptide is Small ribosomal subunit protein bS20 (Yersinia enterocolitica serotype O:8 / biotype 1B (strain NCTC 13174 / 8081)).